We begin with the raw amino-acid sequence, 282 residues long: Acetylglutamate kinase (282 aa).

Residues 62–63 (GG), R84, and N178 each bind substrate.

It belongs to the acetylglutamate kinase family. ArgB subfamily.

It is found in the cytoplasm. It catalyses the reaction N-acetyl-L-glutamate + ATP = N-acetyl-L-glutamyl 5-phosphate + ADP. It functions in the pathway amino-acid biosynthesis; L-arginine biosynthesis; N(2)-acetyl-L-ornithine from L-glutamate: step 2/4. In terms of biological role, catalyzes the ATP-dependent phosphorylation of N-acetyl-L-glutamate. The protein is Acetylglutamate kinase of Thermotoga neapolitana (strain ATCC 49049 / DSM 4359 / NBRC 107923 / NS-E).